The following is a 287-amino-acid chain: Protease HtpX (287 aa).

2 consecutive transmembrane segments (helical) span residues 4–24 (VMLF…VLNI) and 36–56 (LSGL…ISLM). H143 is a binding site for Zn(2+). E144 is a catalytic residue. H147 contributes to the Zn(2+) binding site. Transmembrane regions (helical) follow at residues 158–178 (LMQG…ANIV) and 192–212 (MVYF…ASFI). Residue E221 participates in Zn(2+) binding.

The protein belongs to the peptidase M48B family. Zn(2+) serves as cofactor.

It localises to the cell inner membrane. This is Protease HtpX from Vibrio atlanticus (strain LGP32) (Vibrio splendidus (strain Mel32)).